The following is a 300-amino-acid chain: Bifunctional protein FolD (300 aa).

NADP(+) contacts are provided by residues 168–170, Ser-193, and Ile-234; that span reads GRS.

Belongs to the tetrahydrofolate dehydrogenase/cyclohydrolase family. As to quaternary structure, homodimer.

It catalyses the reaction (6R)-5,10-methylene-5,6,7,8-tetrahydrofolate + NADP(+) = (6R)-5,10-methenyltetrahydrofolate + NADPH. The catalysed reaction is (6R)-5,10-methenyltetrahydrofolate + H2O = (6R)-10-formyltetrahydrofolate + H(+). Its pathway is one-carbon metabolism; tetrahydrofolate interconversion. In terms of biological role, catalyzes the oxidation of 5,10-methylenetetrahydrofolate to 5,10-methenyltetrahydrofolate and then the hydrolysis of 5,10-methenyltetrahydrofolate to 10-formyltetrahydrofolate. The chain is Bifunctional protein FolD from Ehrlichia ruminantium (strain Gardel).